A 394-amino-acid chain; its full sequence is Ornithine aminotransferase 1 (394 aa).

K252 is subject to N6-(pyridoxal phosphate)lysine.

The protein belongs to the class-III pyridoxal-phosphate-dependent aminotransferase family. OAT subfamily. Pyridoxal 5'-phosphate is required as a cofactor.

The protein resides in the cytoplasm. The enzyme catalyses a 2-oxocarboxylate + L-ornithine = L-glutamate 5-semialdehyde + an L-alpha-amino acid. It functions in the pathway amino-acid biosynthesis; L-proline biosynthesis; L-glutamate 5-semialdehyde from L-ornithine: step 1/1. Its function is as follows. Catalyzes the interconversion of ornithine to glutamate semialdehyde. The sequence is that of Ornithine aminotransferase 1 from Staphylococcus aureus (strain COL).